The sequence spans 59 residues: Large ribosomal subunit protein uL30 (59 aa).

It belongs to the universal ribosomal protein uL30 family. Part of the 50S ribosomal subunit.

This is Large ribosomal subunit protein uL30 from Psychrobacter arcticus (strain DSM 17307 / VKM B-2377 / 273-4).